Consider the following 156-residue polypeptide: Endoribonuclease YbeY (156 aa).

Zn(2+)-binding residues include His122, His126, and His132.

It belongs to the endoribonuclease YbeY family. Zn(2+) serves as cofactor.

The protein resides in the cytoplasm. Single strand-specific metallo-endoribonuclease involved in late-stage 70S ribosome quality control and in maturation of the 3' terminus of the 16S rRNA. The polypeptide is Endoribonuclease YbeY (Geobacillus kaustophilus (strain HTA426)).